Consider the following 542-residue polypeptide: Chitinase 2 (542 aa).

Residues 1–22 form the signal peptide; it reads MLTRTFLGMAISAFLASTGVQA. The region spanning 29–314 is the GH18 domain; sequence PNVMYYWGQN…SQLYSLVHSG (286 aa). Catalysis depends on Glu166, which acts as the Proton donor. A disordered region spans residues 312-356; sequence HSGGSTPPPPSSSSATKTTTKTTATSTKTTTTTAPTATSTPGSCP. Residues 323–354 are compositionally biased toward low complexity; sequence SSSATKTTTKTTATSTKTTTTTAPTATSTPGS. Residues 355–406 are chitin-binding, high affinity; the sequence is CPVANQPCSTQNQYACTADGKYAVCDHGKWVASSCPSNTVCIPTTDGASIYC. Residues 447–542 constitute a propeptide that is removed on maturation; that stretch reads AQLAVTSTDK…APSTSAWNFK (96 aa).

The protein belongs to the glycosyl hydrolase 18 family. Chitinase class III subfamily. Monomer. In terms of processing, O-glycosylated.

Its subcellular location is the secreted. It catalyses the reaction Random endo-hydrolysis of N-acetyl-beta-D-glucosaminide (1-&gt;4)-beta-linkages in chitin and chitodextrins.. Probably involved in the apical growth and branching of fungal hyphae. The polypeptide is Chitinase 2 (CHI2) (Rhizopus oligosporus (Rhizopus microsporus var. oligosporus)).